The chain runs to 285 residues: Bifunctional protein FolD (285 aa).

NADP(+) contacts are provided by residues 165-167 (GRS) and Ser190.

Belongs to the tetrahydrofolate dehydrogenase/cyclohydrolase family. As to quaternary structure, homodimer.

The enzyme catalyses (6R)-5,10-methylene-5,6,7,8-tetrahydrofolate + NADP(+) = (6R)-5,10-methenyltetrahydrofolate + NADPH. It carries out the reaction (6R)-5,10-methenyltetrahydrofolate + H2O = (6R)-10-formyltetrahydrofolate + H(+). The protein operates within one-carbon metabolism; tetrahydrofolate interconversion. Catalyzes the oxidation of 5,10-methylenetetrahydrofolate to 5,10-methenyltetrahydrofolate and then the hydrolysis of 5,10-methenyltetrahydrofolate to 10-formyltetrahydrofolate. The chain is Bifunctional protein FolD from Burkholderia orbicola (strain AU 1054).